Consider the following 508-residue polypeptide: Bifunctional purine biosynthesis protein PurH (508 aa).

One can recognise an MGS-like domain in the interval 1-144 (MTRALLSVSD…KNFAGVLPIV (144 aa)).

This sequence belongs to the PurH family.

It catalyses the reaction (6R)-10-formyltetrahydrofolate + 5-amino-1-(5-phospho-beta-D-ribosyl)imidazole-4-carboxamide = 5-formamido-1-(5-phospho-D-ribosyl)imidazole-4-carboxamide + (6S)-5,6,7,8-tetrahydrofolate. It carries out the reaction IMP + H2O = 5-formamido-1-(5-phospho-D-ribosyl)imidazole-4-carboxamide. It participates in purine metabolism; IMP biosynthesis via de novo pathway; 5-formamido-1-(5-phospho-D-ribosyl)imidazole-4-carboxamide from 5-amino-1-(5-phospho-D-ribosyl)imidazole-4-carboxamide (10-formyl THF route): step 1/1. Its pathway is purine metabolism; IMP biosynthesis via de novo pathway; IMP from 5-formamido-1-(5-phospho-D-ribosyl)imidazole-4-carboxamide: step 1/1. The sequence is that of Bifunctional purine biosynthesis protein PurH from Leuconostoc citreum (strain KM20).